The following is a 304-amino-acid chain: Non-specific ribonucleoside hydrolase RihC (304 aa).

Residue His233 is part of the active site.

It belongs to the IUNH family. RihC subfamily.

Functionally, hydrolyzes both purine and pyrimidine ribonucleosides with a broad-substrate specificity. In Klebsiella pneumoniae (strain 342), this protein is Non-specific ribonucleoside hydrolase RihC.